The primary structure comprises 968 residues: RNA polymerase-associated protein RapA (968 aa).

The Helicase ATP-binding domain occupies 164 to 334; sequence DVGRRHAPRV…FARLRLLDPN (171 aa). Position 177-184 (177-184) interacts with ATP; it reads DEVGLGKT. Residues 280 to 283 carry the DEAH box motif; the sequence is DEAH. In terms of domain architecture, Helicase C-terminal spans 490-662; that stretch reads RVEWLMGYLT…YLASPDQTEG (173 aa).

This sequence belongs to the SNF2/RAD54 helicase family. RapA subfamily. Interacts with the RNAP. Has a higher affinity for the core RNAP than for the holoenzyme. Its ATPase activity is stimulated by binding to RNAP.

Transcription regulator that activates transcription by stimulating RNA polymerase (RNAP) recycling in case of stress conditions such as supercoiled DNA or high salt concentrations. Probably acts by releasing the RNAP, when it is trapped or immobilized on tightly supercoiled DNA. Does not activate transcription on linear DNA. Probably not involved in DNA repair. The chain is RNA polymerase-associated protein RapA from Shigella boydii serotype 4 (strain Sb227).